The chain runs to 58 residues: Metallothionein (58 aa).

The segment at 1-29 is beta; the sequence is MPDPCCIDKCECKEGGCKAGCKCTSCRCT. A divalent metal cation contacts are provided by Cys5, Cys6, Cys10, Cys12, Cys17, Cys21, Cys23, Cys26, Cys28, Cys31, Cys34, Cys38, Cys40, Cys46, Cys50, Cys54, Cys56, and Cys57. The alpha stretch occupies residues 30–58; sequence PCEKCSSGCKCTTKEDCCKTCTKPCSCCP.

The protein belongs to the metallothionein superfamily. Type 3 family.

Functionally, metallothioneins have a high content of cysteine residues that bind various heavy metals. Class I MTS in marine crustacea are involved in the sequestration of elevated levels of heavy-metal ions. This chain is Metallothionein, found in Carcinus maenas (Common shore crab).